Here is a 560-residue protein sequence, read N- to C-terminus: Bifunctional NAD(P)H-hydrate repair enzyme (560 aa).

An NAD(P)H-hydrate epimerase region spans residues 1–241 (MLSRLSERCT…WMTAPERMRV (241 aa)). The YjeF N-terminal domain maps to 29–235 (LRDAEPAAAA…SLGLEDWMTA (207 aa)). The NADPHX 1; for epimerase activity stretch occupies residues 77-81 (NNGGD). Residues N78 and D145 each contribute to the K(+) site. Residues 149-155 (GTGICGP) are NADPHX 1; for epimerase activity. (6S)-NADPHX is bound by residues Y160 and D178. S181 lines the K(+) pocket. A YjeF C-terminal domain is found at 249–547 (LDDVYEYFGI…HRVPLIVNAS (299 aa)). The segment at 249–560 (LDDVYEYFGI…PASRQRPSGQ (312 aa)) is ADP-dependent (S)-NAD(P)H-hydrate dehydratase. G351 is a (6S)-NADPHX binding site. Residues 417-423 (HPGEAAR) form an NADPHX 2; for dehydratase activity region. ADP contacts are provided by residues 454–458 (KGPGT) and 475–484 (NAGMASGGMG). Residue D485 participates in (6S)-NADPHX binding.

In the N-terminal section; belongs to the NnrE/AIBP family. This sequence in the C-terminal section; belongs to the NnrD/CARKD family. The cofactor is K(+).

The enzyme catalyses (6S)-NADHX + ADP = AMP + phosphate + NADH + H(+). The catalysed reaction is (6S)-NADPHX + ADP = AMP + phosphate + NADPH + H(+). It carries out the reaction (6R)-NADHX = (6S)-NADHX. It catalyses the reaction (6R)-NADPHX = (6S)-NADPHX. In terms of biological role, bifunctional enzyme that catalyzes the epimerization of the S- and R-forms of NAD(P)HX and the dehydration of the S-form of NAD(P)HX at the expense of ADP, which is converted to AMP. This allows the repair of both epimers of NAD(P)HX, a damaged form of NAD(P)H that is a result of enzymatic or heat-dependent hydration. The chain is Bifunctional NAD(P)H-hydrate repair enzyme from Leishmania major.